The sequence spans 74 residues: Defensin-like protein P322 (74 aa).

The first 19 residues, 1 to 19 (MRFFATFFLLAMLVVATKM), serve as a signal peptide directing secretion. 4 disulfide bridges follow: Cys-30/Cys-74, Cys-41/Cys-61, Cys-47/Cys-68, and Cys-51/Cys-70.

The protein belongs to the DEFL family. Protease inhibitor I18 (RTI/MTI-2) subfamily. As to expression, tuber.

It localises to the secreted. This is Defensin-like protein P322 from Solanum tuberosum (Potato).